Consider the following 306-residue polypeptide: 2-phosphoglycerate kinase (306 aa).

One can recognise an ATP-cone domain in the interval 1–90; it reads MIMVQGEVSG…LWRKIRQCKE (90 aa).

The protein belongs to the 2-phosphoglycerate kinase family. The cofactor is a divalent metal cation.

The enzyme catalyses (2R)-2-phosphoglycerate + ATP = (2R)-2,3-bisphosphoglycerate + ADP + H(+). It participates in thermoadapter biosynthesis; cyclic 2,3-diphosphoglycerate biosynthesis; cyclic 2,3-diphosphoglycerate from 2-phospho-D-glycerate: step 1/2. Catalyzes the phosphorylation of 2-phosphoglycerate to 2,3-diphosphoglycerate. Involved in the biosynthesis of cyclic 2,3-bisphosphoglycerate, a thermoprotectant. The polypeptide is 2-phosphoglycerate kinase (Methanothermobacter thermautotrophicus (strain ATCC 29096 / DSM 1053 / JCM 10044 / NBRC 100330 / Delta H) (Methanobacterium thermoautotrophicum)).